We begin with the raw amino-acid sequence, 285 residues long: Formate channel FocA (285 aa).

Over 1–30 (MKADNPFDLLLPAAMAKVAEEAGVYKATKH) the chain is Cytoplasmic. Residues 31–56 (PLKTFYLAITAGVFISIAFVFYITAT) traverse the membrane as a helical segment. Residues 57-64 (TGTGTMPF) are Periplasmic-facing. The helical transmembrane segment at 65–85 (GMAKLVGGICFSLGLILCVVC) threads the bilayer. At 86 to 112 (GADLFTSTVLIVVAKASGRITWGQLAK) the chain is on the cytoplasmic side. Residues 113-135 (NWLNVYFGNLVGALLFVLLMWLS) form a helical membrane-spanning segment. Over 136–160 (GEYMTANGQWGLNVLQTADHKVHHT) the chain is Periplasmic. The helical transmembrane segment at 161 to 181 (FIEAVCLGILANLMVCLAVWM) threads the bilayer. Over 182–187 (SYSGRS) the chain is Cytoplasmic. A helical membrane pass occupies residues 188–205 (LMDKAFIMVLPVAMFVAS). Over 206–249 (GFEHSIANMFMIPMGIVIRDFASPEFWTAVGSAPENFSHLTVMN) the chain is Periplasmic. The helical transmembrane segment at 250–276 (FITDNLIPVTIGNIIGGGLLVGLTYWV) threads the bilayer. The Cytoplasmic portion of the chain corresponds to 277-285 (IYLRENDHH).

The protein belongs to the FNT transporter (TC 1.A.16) family. Homopentamer.

The protein resides in the cell inner membrane. The catalysed reaction is formate(in) = formate(out). In terms of biological role, involved in the bidirectional transport of formate during mixed-acid fermentation. Functions to maintain relatively constant intracellular formate levels during growth, using different mechanisms for efflux and uptake of the anion. Is impermeable to water. The protein is Formate channel FocA of Escherichia coli O157:H7.